The primary structure comprises 86 residues: Small ribosomal subunit protein bS20 (86 aa).

Belongs to the bacterial ribosomal protein bS20 family.

In terms of biological role, binds directly to 16S ribosomal RNA. The protein is Small ribosomal subunit protein bS20 of Mycolicibacterium vanbaalenii (strain DSM 7251 / JCM 13017 / BCRC 16820 / KCTC 9966 / NRRL B-24157 / PYR-1) (Mycobacterium vanbaalenii).